A 219-amino-acid polypeptide reads, in one-letter code: Uracil-DNA glycosylase (219 aa).

Catalysis depends on Asp61, which acts as the Proton acceptor.

It belongs to the uracil-DNA glycosylase (UDG) superfamily. UNG family.

It is found in the cytoplasm. The enzyme catalyses Hydrolyzes single-stranded DNA or mismatched double-stranded DNA and polynucleotides, releasing free uracil.. In terms of biological role, excises uracil residues from the DNA which can arise as a result of misincorporation of dUMP residues by DNA polymerase or due to deamination of cytosine. The chain is Uracil-DNA glycosylase from Haemophilus influenzae (strain 86-028NP).